The chain runs to 305 residues: Tyrosine recombinase XerD (305 aa).

One can recognise a Core-binding (CB) domain in the interval 9–94 (MQDFGYVEQF…AIRRLFQYLH (86 aa)). The region spanning 115-299 (RLPKDISEEQ…ATERLKQIHS (185 aa)) is the Tyr recombinase domain. Active-site residues include Arg155, Lys179, His251, Arg254, and His277. Tyr286 (O-(3'-phospho-DNA)-tyrosine intermediate) is an active-site residue.

Belongs to the 'phage' integrase family. XerD subfamily. As to quaternary structure, forms a cyclic heterotetrameric complex composed of two molecules of XerC and two molecules of XerD.

It is found in the cytoplasm. Site-specific tyrosine recombinase, which acts by catalyzing the cutting and rejoining of the recombining DNA molecules. The XerC-XerD complex is essential to convert dimers of the bacterial chromosome into monomers to permit their segregation at cell division. It also contributes to the segregational stability of plasmids. The sequence is that of Tyrosine recombinase XerD from Vibrio vulnificus (strain CMCP6).